Consider the following 130-residue polypeptide: Small ribosomal subunit protein uS9 (130 aa).

Belongs to the universal ribosomal protein uS9 family.

This chain is Small ribosomal subunit protein uS9, found in Bordetella avium (strain 197N).